The sequence spans 298 residues: Tyrosine recombinase XerC (298 aa).

A Core-binding (CB) domain is found at 1 to 84; it reads MNHIQEAFLN…TLRTFYEYWM (84 aa). A Tyr recombinase domain is found at 105–286; the sequence is YLPQFFYEEE…SNQQLRKVYL (182 aa). Residues R145, K169, H238, R241, and H264 contribute to the active site. The active-site O-(3'-phospho-DNA)-tyrosine intermediate is the Y273.

This sequence belongs to the 'phage' integrase family. XerC subfamily. As to quaternary structure, forms a cyclic heterotetrameric complex composed of two molecules of XerC and two molecules of XerD.

Its subcellular location is the cytoplasm. Functionally, site-specific tyrosine recombinase, which acts by catalyzing the cutting and rejoining of the recombining DNA molecules. The XerC-XerD complex is essential to convert dimers of the bacterial chromosome into monomers to permit their segregation at cell division. It also contributes to the segregational stability of plasmids. The chain is Tyrosine recombinase XerC from Staphylococcus aureus (strain MRSA252).